The chain runs to 418 residues: MAERFVVTGGNRLSGEVTVGGAKNSVLKLMAATLLAEGTSTITNCPDILDVPLMAEVLRGLGATVELYGDVARITSPDEPKYDADFAAVRQFRASVCVLGPLVGRCKQARVALPGGDAIGSRPLDMHQAGLRQLGARCNIEHGCVVASAETLRGAEIQLEFPSVGATENILMAAVVAEGVTTIHNAAREPDVVDLCTMLNQMGAQVEGVGSPTMTITGVPRLYPTEHRVIGDRIVAATWGIAAAMTRGDIAVTGVDPAHLQLVLHKLHDAGATVTQTDDSFRVAQYERPKAVNVATLPFPGFPTDLQPMAIALTSIADGTSMITENVFEARFRFVEEMIRLGADARTDGHHAVVRGLPQLSSAPVWCSDIRAGAGLVLAGLVADGDTEVYDVFHIDRGYPLFVENLANLGAEIERVCL.

Residue 23–24 coordinates phosphoenolpyruvate; that stretch reads KN. A UDP-N-acetyl-alpha-D-glucosamine-binding site is contributed by R93. Catalysis depends on D117, which acts as the Proton donor. UDP-N-acetyl-alpha-D-glucosamine contacts are provided by D305 and V327.

Belongs to the EPSP synthase family. MurA subfamily.

Its subcellular location is the cytoplasm. The catalysed reaction is phosphoenolpyruvate + UDP-N-acetyl-alpha-D-glucosamine = UDP-N-acetyl-3-O-(1-carboxyvinyl)-alpha-D-glucosamine + phosphate. It participates in cell wall biogenesis; peptidoglycan biosynthesis. Functionally, cell wall formation. Adds enolpyruvyl to UDP-N-acetylglucosamine. The sequence is that of UDP-N-acetylglucosamine 1-carboxyvinyltransferase from Mycobacterium leprae (strain TN).